The primary structure comprises 158 residues: Superoxide dismutase [Cu-Zn] (158 aa).

3 residues coordinate Cu cation: H46, H48, and H63. A disulfide bond links C57 and C149. H63, H71, H80, and D83 together coordinate Zn(2+). H120 serves as a coordination point for Cu cation.

This sequence belongs to the Cu-Zn superoxide dismutase family. Homodimer. Cu cation is required as a cofactor. Zn(2+) serves as cofactor.

The protein resides in the cytoplasm. The enzyme catalyses 2 superoxide + 2 H(+) = H2O2 + O2. Destroys radicals which are normally produced within the cells and which are toxic to biological systems. This Onchocerca volvulus protein is Superoxide dismutase [Cu-Zn] (sod-1).